The chain runs to 535 residues: MQEKWWHNAVVYQVYPKSFMDSNGDGVGDLPGITSKLDYLAKLGITAIWLSPVYDSPMDDNGYDIADYQAIAAIFGTMEDMDQLIAEAKKRDIRIIMDLVVNHTSDEHAWFVEACENTDSPERDYYIWRDEPNDLDSIFSGSAWEYDEKSGQYYLHFFSKKQPDLNWENEKLRQKIYEMMNFWIDKGIGGFRMDVIDMIGKIPDEKVVNNGPMLHPYLKEMNQATFGDKDLLTVGETWGATPEIAKFYSDPKGQELSMVFQFEHIGLQYQEGQPKWHYQKELNIAKLKEIFNKWQTELGVEDGWNSLFWNNHDLPRIVSIWGNDQEYREKSAKAFAILLHLMRGTPYIYQGEEIGMTNYPFETLDQVEDIESLNYAREALEKGVPIEEIMDSIRVIGRDNARTPMQWDESKNAGFSTGQPWLAVNPNYEMINVQEALANPDSIFYTYQKLVQIRKENSWLVRADFELLDTADKVFAYIRKDGDRRFLVVANLSNEEQDLTVEGKVKSVLIENTAAKEVLEKQVLAPWDAFCVELL.

Asp194 (nucleophile) is an active-site residue. Glu236 functions as the Proton donor in the catalytic mechanism.

Belongs to the glycosyl hydrolase 13 family.

The protein localises to the cytoplasm. It carries out the reaction Hydrolysis of (1-&gt;6)-alpha-D-glucosidic linkages in (1-&gt;6)-alpha-D-glucans and derived oligosaccharides.. In terms of biological role, the physiological substrates may be short isomaltosaccharides. This chain is Glucan 1,6-alpha-glucosidase (dexB), found in Streptococcus pneumoniae serotype 4 (strain ATCC BAA-334 / TIGR4).